An 82-amino-acid polypeptide reads, in one-letter code: Three-finger toxin MicTx3 (82 aa).

An N-terminal signal peptide occupies residues 1 to 21 (MKTLLLTLVVVTIMCLDLGYT). Intrachain disulfides connect cysteine 24-cysteine 44, cysteine 38-cysteine 59, cysteine 63-cysteine 74, and cysteine 75-cysteine 80.

It belongs to the three-finger toxin family. Short-chain subfamily. As to expression, expressed by the venom gland.

It localises to the secreted. Functionally, has been described to inhibit nicotinic acetylcholine receptor (nAChR) alpha-7/CHRNA7 subunits and to bind acetylcholine binding protein (AChBP) (Kd=29.5 nM). This is Three-finger toxin MicTx3 from Micrurus corallinus (Brazilian coral snake).